A 311-amino-acid polypeptide reads, in one-letter code: MKPRKVMIIGAGNVGTAAAHAFVNQKFVEELILVDLNKERVEGNRKDLADAAAFMPGKMDITVRDASDCADVDIAVITVTAGPLKEGQTRLDELRSTSRIVSSIVPEMMKGGFNGIFLIATNPCDIITYQVWKLSGLPRERVLGTGVWLDTTRLRRLLAEKLDIAAQSIDAFILGEHGDSQFPVWSHSSIYGKPVNEYSVEKLGEALDLKQIGETARDTGFEIYHQKGCTEYGIGGTIVEICRHIFSGSQRALTVSCVLDGEYGESGLAIGVPAVLSQNGVKEIISLKLDEKEKEAFANSVAVIKKSIQSI.

Val14, Asp35, and Arg40 together coordinate NAD(+). Arg90 is a binding site for substrate. NAD(+) is bound by residues Ser103, 120 to 122 (ATN), and Thr145. 122 to 125 (NPCD) serves as a coordination point for substrate. 150–153 (DTTR) contacts substrate. His177 (proton acceptor) is an active-site residue. Residue Thr230 coordinates substrate.

It belongs to the LDH/MDH superfamily. LDH family. As to quaternary structure, homotetramer.

The protein resides in the cytoplasm. It carries out the reaction (S)-lactate + NAD(+) = pyruvate + NADH + H(+). The protein operates within fermentation; pyruvate fermentation to lactate; (S)-lactate from pyruvate: step 1/1. Functionally, catalyzes the conversion of lactate to pyruvate. The polypeptide is L-lactate dehydrogenase 2 (Listeria monocytogenes serotype 4b (strain F2365)).